We begin with the raw amino-acid sequence, 213 residues long: Guanylate kinase (213 aa).

Positions 12–190 constitute a Guanylate kinase-like domain; it reads GLCLVVAAPS…AIDQVRTILH (179 aa). 19-26 is a binding site for ATP; that stretch reads APSGAGKS.

Belongs to the guanylate kinase family.

It is found in the cytoplasm. It carries out the reaction GMP + ATP = GDP + ADP. In terms of biological role, essential for recycling GMP and indirectly, cGMP. This is Guanylate kinase from Granulibacter bethesdensis (strain ATCC BAA-1260 / CGDNIH1).